Consider the following 471-residue polypeptide: Adenosylhomocysteinase (471 aa).

Substrate contacts are provided by T60, D135, and E196. 197–199 (TTT) lines the NAD(+) pocket. K226 and D230 together coordinate substrate. Residues N231, 260–265 (GYGDVG), E283, N318, 339–341 (IGH), and N387 each bind NAD(+).

It belongs to the adenosylhomocysteinase family. Requires NAD(+) as cofactor.

It localises to the cytoplasm. It catalyses the reaction S-adenosyl-L-homocysteine + H2O = L-homocysteine + adenosine. It participates in amino-acid biosynthesis; L-homocysteine biosynthesis; L-homocysteine from S-adenosyl-L-homocysteine: step 1/1. In terms of biological role, may play a key role in the regulation of the intracellular concentration of adenosylhomocysteine. The chain is Adenosylhomocysteinase from Chlorobaculum tepidum (strain ATCC 49652 / DSM 12025 / NBRC 103806 / TLS) (Chlorobium tepidum).